A 479-amino-acid chain; its full sequence is UDP-N-acetylmuramate--L-alanine ligase (479 aa).

127–133 (GTHGKTT) provides a ligand contact to ATP.

It belongs to the MurCDEF family.

The protein localises to the cytoplasm. The catalysed reaction is UDP-N-acetyl-alpha-D-muramate + L-alanine + ATP = UDP-N-acetyl-alpha-D-muramoyl-L-alanine + ADP + phosphate + H(+). It functions in the pathway cell wall biogenesis; peptidoglycan biosynthesis. Its function is as follows. Cell wall formation. This is UDP-N-acetylmuramate--L-alanine ligase from Shewanella denitrificans (strain OS217 / ATCC BAA-1090 / DSM 15013).